Reading from the N-terminus, the 390-residue chain is Alpha-2B adrenergic receptor (390 aa).

Residues 1 to 25 (AIATVITFLILFTIFGNSLVILAVL) form a helical membrane-spanning segment. Residues 26 to 36 (TSRSLRAPQNL) lie on the Cytoplasmic side of the membrane. The helical transmembrane segment at 37 to 62 (FLVSLAAADIMVATLIIPFSLANELL) threads the bilayer. At 63–72 (GYWYFRRTWC) the chain is on the extracellular side. A disulfide bridge connects residues Cys-72 and Cys-151. A helical membrane pass occupies residues 73–95 (EVYLALDVLFCTSSIVHLCAISL). Over 96-117 (DRYWAVSRALEYNSKRTPRRIK) the chain is Cytoplasmic. Residues 118-140 (CIILTVWLIAAAISLPPLIYKGD) traverse the membrane as a helical segment. Residues 141–156 (QGPQPRGRPQCKLNQE) are Extracellular-facing. The chain crosses the membrane as a helical span at residues 157 to 180 (AWYILSSSIGSFFAPCLIMILVYL). At 181 to 354 (RIYLIAKRSH…LTREKRFTFV (174 aa)) the chain is on the cytoplasmic side. Disordered regions lie at residues 191–218 (RRGP…PSAL) and 233–311 (EANG…PLQQ). A compositionally biased stretch (acidic residues) spans 280 to 292 (LEEEADKEEEEEC). A helical transmembrane segment spans residues 355 to 378 (LAVVIGVFVLCWFPFFFSYSLGAI). Residues 379 to 390 (CPQHCKVPHGLF) are Extracellular-facing.

This sequence belongs to the G-protein coupled receptor 1 family. Adrenergic receptor subfamily. ADRA2B sub-subfamily. As to quaternary structure, interacts with RAB26. Interacts with PPP1R9B. Interacts with GGA1, GGA2 and GGA3.

It is found in the cell membrane. In terms of biological role, alpha-2 adrenergic receptors mediate the catecholamine-induced inhibition of adenylate cyclase through the action of G proteins. This Dugong dugon (Dugong) protein is Alpha-2B adrenergic receptor (ADRA2B).